We begin with the raw amino-acid sequence, 432 residues long: Glutamate-1-semialdehyde 2,1-aminomutase 1 (432 aa).

Residue Lys272 is modified to N6-(pyridoxal phosphate)lysine.

The protein belongs to the class-III pyridoxal-phosphate-dependent aminotransferase family. HemL subfamily. As to quaternary structure, homodimer. It depends on pyridoxal 5'-phosphate as a cofactor.

The protein localises to the cytoplasm. It catalyses the reaction (S)-4-amino-5-oxopentanoate = 5-aminolevulinate. It functions in the pathway porphyrin-containing compound metabolism; protoporphyrin-IX biosynthesis; 5-aminolevulinate from L-glutamyl-tRNA(Glu): step 2/2. The chain is Glutamate-1-semialdehyde 2,1-aminomutase 1 from Exiguobacterium sp. (strain ATCC BAA-1283 / AT1b).